The primary structure comprises 393 residues: ATP phosphoribosyltransferase regulatory subunit (393 aa).

This sequence belongs to the class-II aminoacyl-tRNA synthetase family. HisZ subfamily. In terms of assembly, heteromultimer composed of HisG and HisZ subunits.

The protein resides in the cytoplasm. The protein operates within amino-acid biosynthesis; L-histidine biosynthesis; L-histidine from 5-phospho-alpha-D-ribose 1-diphosphate: step 1/9. Its function is as follows. Required for the first step of histidine biosynthesis. May allow the feedback regulation of ATP phosphoribosyltransferase activity by histidine. The protein is ATP phosphoribosyltransferase regulatory subunit of Marinobacter nauticus (strain ATCC 700491 / DSM 11845 / VT8) (Marinobacter aquaeolei).